Consider the following 1594-residue polypeptide: Calpain-D (1594 aa).

2 consecutive RanBP2-type zinc fingers follow at residues 1-35 (MGTISSVLQWSCTKCNTINPTESLKCFNCGTVRKV) and 135-164 (LNRRWVCHACGTDNSSVTWHCLICDTVSYL). 5 disordered regions span residues 210–256 (EEQH…TAID), 371–400 (EPQQKSPANPQQLQRKTQREPAAVSMNPTQ), 420–459 (ASSSSVSSSSNHHHHHHSNSNSNSSGNSNIINNNSSSSSG), 524–543 (KKKQQIASESQTNNNTGSGE), and 554–606 (AGLG…RLSG). Positions 215-229 (HQLHSQHLHKRHLKG) are enriched in basic residues. Composition is skewed to polar residues over residues 246–255 (RRTQSLSTAI) and 371–385 (EPQQKSPANPQQLQR). Ser250 carries the phosphoserine modification. The span at 438–459 (NSNSNSSGNSNIINNNSSSSSG) shows a compositional bias: low complexity. A compositionally biased stretch (polar residues) spans 528–541 (QIASESQTNNNTGS). Residues 643-673 (RSKMWICIKCSYAYNRLWLQTCEMCEAKAEQ) form a RanBP2-type 3 zinc finger. The disordered stretch occupies residues 684 to 703 (QQQQQQHHHHHLQQQQAEAP). 2 RanBP2-type zinc fingers span residues 704-733 (RDEPWTCKKCTLVNYSTAMACVVCGGSKLK) and 744-774 (RKGEFWTCSHCTLKNSLHSPVCSACKSHRQP). Disordered regions lie at residues 786 to 811 (RPDGQSYEEQDAAAVGGGGGSAHQSG) and 860 to 884 (SLQQQRNSSSSGAIPKRHSTGGSIV). Positions 860–871 (SLQQQRNSSSSG) are enriched in polar residues. Residues 927-956 (STKKWQCPACTYDNCAASVVCDICSSPRGL) form a RanBP2-type 6 zinc finger. The Calpain catalytic domain maps to 1014-1321 (LFVDDSFPPA…FDCIDICKVR (308 aa)). Residues Cys1079, His1245, and Asn1265 contribute to the active site.

This sequence belongs to the peptidase C2 family.

Has a role in eye development. Functionally, calcium-regulated non-lysosomal thiol-protease. In Drosophila melanogaster (Fruit fly), this protein is Calpain-D (sol).